A 217-amino-acid polypeptide reads, in one-letter code: Large ribosomal subunit protein uL3 (217 aa).

Positions 131–155 (FSSSRASHGNSRSHNVPGSIGMAQD) are disordered. Low complexity predominate over residues 132–145 (SSSRASHGNSRSHN). Residue Q154 is modified to N5-methylglutamine.

Belongs to the universal ribosomal protein uL3 family. In terms of assembly, part of the 50S ribosomal subunit. Forms a cluster with proteins L14 and L19. Methylated by PrmB.

In terms of biological role, one of the primary rRNA binding proteins, it binds directly near the 3'-end of the 23S rRNA, where it nucleates assembly of the 50S subunit. The protein is Large ribosomal subunit protein uL3 of Nitrosomonas eutropha (strain DSM 101675 / C91 / Nm57).